The chain runs to 192 residues: uncharacterized protein (192 aa).

It to R.meliloti RA0936 and y4nF.

This is an uncharacterized protein from Sinorhizobium fredii (strain NBRC 101917 / NGR234).